The following is a 515-amino-acid chain: Na(+)/H(+) antiporter NhaB (515 aa).

Transmembrane regions (helical) follow at residues 23–43, 45–65, 96–116, 136–156, 204–224, 245–265, 305–325, 349–369, 393–413, 449–469, and 480–500; these read LAII…NPFV, GWLL…CYPL, VVLL…LLLF, CLAS…AVVI, LMMH…VGEP, APIT…VEHF, ALIG…VGLI, FEEA…VAVI, LFYL…VGTV, ATPN…SPLI, and ALPY…FLLI.

This sequence belongs to the NhaB Na(+)/H(+) (TC 2.A.34) antiporter family.

It is found in the cell inner membrane. The enzyme catalyses 2 Na(+)(in) + 3 H(+)(out) = 2 Na(+)(out) + 3 H(+)(in). Functionally, na(+)/H(+) antiporter that extrudes sodium in exchange for external protons. The polypeptide is Na(+)/H(+) antiporter NhaB (Photorhabdus laumondii subsp. laumondii (strain DSM 15139 / CIP 105565 / TT01) (Photorhabdus luminescens subsp. laumondii)).